Reading from the N-terminus, the 347-residue chain is Rhodopsin (347 aa).

At 1 to 33 the chain is on the extracellular side; it reads TEGPDFYIPMVNTTGVVRSPYEYPQYYLVNPAA. Asparagine 12 is a glycosylation site (N-linked (GlcNAc...) asparagine). A helical membrane pass occupies residues 34–58; sequence FAVLGAYMFFLIIIGFPINFLTLYV. The Cytoplasmic portion of the chain corresponds to 59–70; that stretch reads TLEHKKLRTPLN. A helical membrane pass occupies residues 71–93; sequence YILLNLAVADLFMVIGGFTTTMY. Over 94–107 the chain is Extracellular; the sequence is SSMHGYFVLGRLGC. The cysteines at positions 107 and 184 are disulfide-linked. Residues 108–130 traverse the membrane as a helical segment; the sequence is NIEGFFATLGGMISLWSLAVLAI. Positions 131 to 133 match the 'Ionic lock' involved in activated form stabilization motif; it reads ERW. At 131 to 149 the chain is on the cytoplasmic side; it reads ERWVVVCKPISNFRFGENH. The chain crosses the membrane as a helical span at residues 150–170; the sequence is AIMGVSLTWVMALACTVPPLV. Over 171–199 the chain is Extracellular; sequence GWSRYIPEGMQCACGIDYYTRAEGYNNES. Asparagine 197 is a glycosylation site (N-linked (GlcNAc...) asparagine). Residues 200-221 traverse the membrane as a helical segment; that stretch reads FVIYMFTFHFLFPMFIIFFCYG. Residues 222 to 249 are Cytoplasmic-facing; sequence RLLCAVKEAAAAQQESETTQRAEREVTR. The chain crosses the membrane as a helical span at residues 250–271; the sequence is MVILMVIGYLVCWLPYASVAWF. At 272 to 283 the chain is on the extracellular side; that stretch reads IFTHKGSEFGPL. Residues 284 to 305 traverse the membrane as a helical segment; it reads FMAVPSFFAKSSSIYNPIIYIC. Lysine 293 bears the N6-(retinylidene)lysine mark. Residues 306–347 lie on the Cytoplasmic side of the membrane; that stretch reads MNKQFRQCMITTLFCGKNPFEGQEEDSSTKTEASSASSVSPA. Cysteine 320 is lipidated: S-palmitoyl cysteine. The interval 326-347 is disordered; that stretch reads EGQEEDSSTKTEASSASSVSPA. Residues 335-347 are compositionally biased toward low complexity; sequence KTEASSASSVSPA.

Belongs to the G-protein coupled receptor 1 family. Opsin subfamily. Phosphorylated on some or all of the serine and threonine residues present in the C-terminal region. Post-translationally, contains one covalently linked retinal chromophore.

It is found in the membrane. It localises to the cell projection. The protein resides in the cilium. Its subcellular location is the photoreceptor outer segment. Photoreceptor required for image-forming vision at low light intensity. While most salt water fish species use retinal as chromophore, most freshwater fish use 3-dehydroretinal, or a mixture of retinal and 3-dehydroretinal. Light-induced isomerization of 11-cis to all-trans retinal triggers a conformational change that activates signaling via G-proteins. Subsequent receptor phosphorylation mediates displacement of the bound G-protein alpha subunit by arrestin and terminates signaling. The sequence is that of Rhodopsin (rho) from Sargocentron tiere (Blue lined squirrelfish).